The primary structure comprises 146 residues: Arginine vasopressin-induced protein 1 (146 aa).

2 disordered regions span residues Met-1 to Ala-31 and Arg-80 to His-146. The segment covering Arg-80–Arg-92 has biased composition (basic residues). Polar residues predominate over residues Gln-106–Arg-123.

May be involved in MAP kinase activation, epithelial sodium channel (ENaC) down-regulation and cell cycling. This Rattus norvegicus (Rat) protein is Arginine vasopressin-induced protein 1 (Avpi1).